The chain runs to 220 residues: Large ribosomal subunit protein uL16 (220 aa).

Belongs to the universal ribosomal protein uL16 family. In terms of assembly, component of the large ribosomal subunit. Mature ribosomes consist of a small (40S) and a large (60S) subunit. The 40S subunit contains about 32 different proteins and 1 molecule of RNA (18S). The 60S subunit contains 45 different proteins and 3 molecules of RNA (25S, 5.8S and 5S).

It localises to the cytoplasm. Functionally, component of the ribosome, a large ribonucleoprotein complex responsible for the synthesis of proteins in the cell. The small ribosomal subunit (SSU) binds messenger RNAs (mRNAs) and translates the encoded message by selecting cognate aminoacyl-transfer RNA (tRNA) molecules. The large subunit (LSU) contains the ribosomal catalytic site termed the peptidyl transferase center (PTC), which catalyzes the formation of peptide bonds, thereby polymerizing the amino acids delivered by tRNAs into a polypeptide chain. The nascent polypeptides leave the ribosome through a tunnel in the LSU and interact with protein factors that function in enzymatic processing, targeting, and the membrane insertion of nascent chains at the exit of the ribosomal tunnel. The polypeptide is Large ribosomal subunit protein uL16 (Candida albicans (strain SC5314 / ATCC MYA-2876) (Yeast)).